Here is a 359-residue protein sequence, read N- to C-terminus: MSSLYKPFCVSEGPCKDAILRRGCAPLQHPAAPTRIPSPGGGSTRTFTPIPNIYPGQRTLAAAAIGGRKITHPWKAIFAGGIAGGIEICITFPTEYVKTQLQLDERANPPRYRGIGDCVKLTVQYHGLRGLYRGLSSLLYGSIPKSAVRFGTFEVLSNPMRDATGRLDNKASLLCGLGAGIAEAVLVVCPMETVKVKFIHDQCSLRPRYRGFFHGVREIIRDQGVRGTYQGLTATLLKQGSNQAIRFYVMNLLRNWYKGDDPARDMHPLVTAMFGATAGAASVFGNTPLDVVKTRMQGLEAHRYKSTMDCAFQILKNEGPLAFYKGTVPRLGRVCLDVAIVFVLYEEVVKLLNNVWRTD.

Solcar repeat units lie at residues 71–159 (THPW…LSNP), 170–256 (KASL…LRNW), and 266–351 (MHPL…VVKL). 4 consecutive transmembrane segments (helical) span residues 77-97 (IFAGGIAGGIEICITFPTEYV), 171-191 (ASLLCGLGAGIAEAVLVVCPM), 269-289 (LVTAMFGATAGAASVFGNTPL), and 336-356 (LDVAIVFVLYEEVVKLLNNVW).

Belongs to the mitochondrial carrier (TC 2.A.29) family. In terms of processing, possesses a short cleavable presequence, which, however, is found to be dispensable both for targeting to mitochondria and insertion into the inner membrane. However, the presequence is required to keep SLC25A1 in a soluble state and thus in an import-competent state. Mature SLC25A1 lacking the presequence is prone to aggregation.

It is found in the mitochondrion inner membrane. It carries out the reaction (S)-malate(in) + citrate(out) = (S)-malate(out) + citrate(in). It catalyses the reaction D-threo-isocitrate(in) + citrate(out) = D-threo-isocitrate(out) + citrate(in). The enzyme catalyses citrate(out) + succinate(in) = citrate(in) + succinate(out). The catalysed reaction is cis-aconitate(in) + citrate(out) = cis-aconitate(out) + citrate(in). It carries out the reaction trans-aconitate(in) + citrate(out) = trans-aconitate(out) + citrate(in). It catalyses the reaction phosphoenolpyruvate(in) + citrate(out) = phosphoenolpyruvate(out) + citrate(in). The enzyme catalyses maleate(in) + citrate(out) = maleate(out) + citrate(in). Mitochondrial electroneutral antiporter that exports citrate from the mitochondria into the cytosol in exchange for malate. Also able to mediate the exchange of citrate for isocitrate, phosphoenolpyruvate, cis-aconitate and to a lesser extent trans-aconitate, maleate and succinate. In the cytoplasm, citrate plays important roles in fatty acid and sterol synthesis, regulation of glycolysis, protein acetylation, and other physiopathological processes. The sequence is that of Tricarboxylate transport protein A, mitochondrial from Danio rerio (Zebrafish).